The chain runs to 429 residues: Adenylosuccinate synthetase (429 aa).

GTP-binding positions include 12-18 (GDEGKGK) and 40-42 (GHT). Catalysis depends on Asp-13, which acts as the Proton acceptor. Mg(2+)-binding residues include Asp-13 and Gly-40. IMP-binding positions include 13–16 (DEGK), 38–41 (NAGH), Thr-128, Arg-142, Gln-223, Thr-238, and Arg-302. His-41 (proton donor) is an active-site residue. 298-304 (TTTGRPR) is a binding site for substrate. GTP-binding positions include Arg-304, 330 to 332 (SID), and 412 to 414 (SVG).

The protein belongs to the adenylosuccinate synthetase family. In terms of assembly, homodimer. Mg(2+) is required as a cofactor.

Its subcellular location is the cytoplasm. The catalysed reaction is IMP + L-aspartate + GTP = N(6)-(1,2-dicarboxyethyl)-AMP + GDP + phosphate + 2 H(+). It functions in the pathway purine metabolism; AMP biosynthesis via de novo pathway; AMP from IMP: step 1/2. Functionally, plays an important role in the de novo pathway of purine nucleotide biosynthesis. Catalyzes the first committed step in the biosynthesis of AMP from IMP. The protein is Adenylosuccinate synthetase of Exiguobacterium sp. (strain ATCC BAA-1283 / AT1b).